Here is a 783-residue protein sequence, read N- to C-terminus: Flavin carrier protein 2 (783 aa).

Residues 1–22 form the signal peptide; sequence MIFLNTFARCLLTCFVLCSGTA. Residues 23–182 lie on the Lumenal side of the membrane; that stretch reads RSSDTNDTTP…NGKTVQTKYA (160 aa). 4 N-linked (GlcNAc...) asparagine glycosylation sites follow: Asn28, Asn65, Asn81, and Asn156. Residues 183-203 traverse the membrane as a helical segment; that stretch reads AWPIAAISGVGVLTSGFVSVI. Residues 204-211 are Cytoplasmic-facing; the sequence is GYSATAAH. A helical transmembrane segment spans residues 212 to 232; the sequence is IASNSISLFIYFQNLAITAMM. Residues 233 to 347 lie on the Lumenal side of the membrane; the sequence is GVSRVPPIAA…AYLANIELSN (115 aa). Asn323 carries N-linked (GlcNAc...) asparagine glycosylation. A helical membrane pass occupies residues 348–368; that stretch reads FFLTGIVFFLFFLFVVVVSLI. Residues 369-402 are Cytoplasmic-facing; the sequence is FFKALLEVLTRARILKETSNFFQYRKNWGSIIKG. The chain crosses the membrane as a helical span at residues 403–423; sequence TLFRLSIIAFPQVSLLAIWEF. The Lumenal segment spans residues 424–430; that stretch reads TQVNSPA. Residues 431–451 traverse the membrane as a helical segment; it reads IVVDAVVILLIITGLLVYGTI. The Cytoplasmic portion of the chain corresponds to 452-492; that stretch reads RVFIKGRESLRLYKNPAYLLYSDTYFLNKFGFLYVQFKADK. The chain crosses the membrane as a helical span at residues 493 to 513; sequence FWWLLPLLSYAFLRSLFVAVL. The Lumenal portion of the chain corresponds to 514–521; sequence QNQGKAQA. Residues 522-542 traverse the membrane as a helical segment; sequence MIIFVIELAYFVCLCWIRPYL. The Cytoplasmic portion of the chain corresponds to 543–547; that stretch reads DKRTN. Residues 548-568 form a helical membrane-spanning segment; it reads VFNIAIHLVNLINAFFFLFFS. The Lumenal portion of the chain corresponds to 569–581; that stretch reads NLFKQPAVVSSVM. Residues 582-602 form a helical membrane-spanning segment; it reads AVILFVLNAVFALFLLLFTIV. At 603 to 783 the chain is on the cytoplasmic side; it reads TCTLALLHRN…ENARNNNPYL (181 aa). The segment at 681–783 is disordered; the sequence is RLFDDETSSS…ENARNNNPYL (103 aa). Residues 688–697 show a composition bias toward low complexity; that stretch reads SSSSFKQNSS. Composition is skewed to polar residues over residues 704–748 and 756–767; these read VTEQ…TSSL and YLGNSNKSYSHF. The span at 768 to 783 shows a compositional bias: low complexity; it reads NNNGSNENARNNNPYL.

The protein belongs to the transient receptor potential (TRP) ion channel family.

It is found in the endoplasmic reticulum membrane. May be responsible for the transport of FAD into the endoplasmic reticulum lumen, where it is required for oxidative protein folding. This chain is Flavin carrier protein 2 (FLC2), found in Saccharomyces cerevisiae (strain ATCC 204508 / S288c) (Baker's yeast).